Here is a 72-residue protein sequence, read N- to C-terminus: Late effector protein 1 (72 aa).

Residues 1 to 22 (MKCYLVVVVAALCTLVAQGSVG) form the signal peptide. Residue Asn-66 is glycosylated (N-linked (GlcNAc...) asparagine).

It belongs to the lep1 family. As to quaternary structure, interacts at the cell wall with secreted rep1 repellent peptides.

It localises to the secreted. The protein resides in the cell wall. Core effector contributing to spore formation and tumor formation at the host plant. Modulates surface hydrophobicity promoting cell-cell or cell-surface contacts. Lep1 and rep1 interact in aerial hyphae to form a strong hydrophobic layer. Plays a crucial role in hyphal aggregation that might be a prerequisite for strong proliferation of diploid cells and for induction of the morphological changes associated with spore formation. The chain is Late effector protein 1 from Sporisorium reilianum (strain SRZ2) (Maize head smut fungus).